We begin with the raw amino-acid sequence, 127 residues long: MARIAGVDIPRNKKIEIAITYIYGIGRSNGMEILRKANVNPERRVRDLTEEEVGRIREIVDREYRVEGDLRREVQLNIKRLMDIGCYRGLRHRRGMPVRGQRTRTNARTRRGRRGQAIGIKKKATKK.

A disordered region spans residues 93-127 (RRGMPVRGQRTRTNARTRRGRRGQAIGIKKKATKK).

This sequence belongs to the universal ribosomal protein uS13 family. Part of the 30S ribosomal subunit. Forms a loose heterodimer with protein S19. Forms two bridges to the 50S subunit in the 70S ribosome.

Its function is as follows. Located at the top of the head of the 30S subunit, it contacts several helices of the 16S rRNA. In the 70S ribosome it contacts the 23S rRNA (bridge B1a) and protein L5 of the 50S subunit (bridge B1b), connecting the 2 subunits; these bridges are implicated in subunit movement. Contacts the tRNAs in the A and P-sites. In Chloroflexus aurantiacus (strain ATCC 29366 / DSM 635 / J-10-fl), this protein is Small ribosomal subunit protein uS13.